Consider the following 352-residue polypeptide: DNA polymerase IV (352 aa).

The 182-residue stretch at 6 to 187 (IIHIDADCFY…VPVKFISGIG (182 aa)) folds into the UmuC domain. Asp10 and Asp105 together coordinate Mg(2+). Residue Glu106 is part of the active site.

It belongs to the DNA polymerase type-Y family. Monomer. Mg(2+) is required as a cofactor.

Its subcellular location is the cytoplasm. It carries out the reaction DNA(n) + a 2'-deoxyribonucleoside 5'-triphosphate = DNA(n+1) + diphosphate. Functionally, poorly processive, error-prone DNA polymerase involved in untargeted mutagenesis. Copies undamaged DNA at stalled replication forks, which arise in vivo from mismatched or misaligned primer ends. These misaligned primers can be extended by PolIV. Exhibits no 3'-5' exonuclease (proofreading) activity. May be involved in translesional synthesis, in conjunction with the beta clamp from PolIII. The sequence is that of DNA polymerase IV from Marinomonas sp. (strain MWYL1).